Here is a 160-residue protein sequence, read N- to C-terminus: Large ribosomal subunit protein uL22c (160 aa).

The protein belongs to the universal ribosomal protein uL22 family. Part of the 50S ribosomal subunit.

The protein localises to the plastid. Its subcellular location is the chloroplast. This protein binds specifically to 23S rRNA. Its function is as follows. The globular domain of the protein is located near the polypeptide exit tunnel on the outside of the subunit, while an extended beta-hairpin is found that lines the wall of the exit tunnel in the center of the 70S ribosome. The chain is Large ribosomal subunit protein uL22c (rpl22) from Olimarabidopsis pumila (Dwarf rocket).